The sequence spans 468 residues: Argininosuccinate lyase (468 aa).

Belongs to the lyase 1 family. Argininosuccinate lyase subfamily.

The protein resides in the cytoplasm. The catalysed reaction is 2-(N(omega)-L-arginino)succinate = fumarate + L-arginine. It functions in the pathway amino-acid biosynthesis; L-arginine biosynthesis; L-arginine from L-ornithine and carbamoyl phosphate: step 3/3. This chain is Argininosuccinate lyase, found in Methanothermobacter thermautotrophicus (strain ATCC 29096 / DSM 1053 / JCM 10044 / NBRC 100330 / Delta H) (Methanobacterium thermoautotrophicum).